Consider the following 196-residue polypeptide: MAYTWRALLLLALAFLGSSMAERDCRVSSFKVKENFDKNRYSGTWYAMAKKDPEGLFLQDNVVAQFTVDENGQMSATAKGRVRLFNNWDVCADMIGSFTDTEDPAKFKMKYWGVASFLQKGNDDHWVVDTDYDTYALHYSCRELNEDGTCADSYSFVFSRDPKGLPPEAQKIVRQRQIDLCLDRKYRVIVHNGFCS.

The signal sequence occupies residues 1 to 21 (MAYTWRALLLLALAFLGSSMA). 3 cysteine pairs are disulfide-bonded: Cys-25–Cys-181, Cys-91–Cys-195, and Cys-141–Cys-150. Gln-119 serves as a coordination point for substrate.

It belongs to the calycin superfamily. Lipocalin family. In terms of assembly, interacts with TTR. Interaction with TTR prevents its loss by filtration through the kidney glomeruli. Interacts with STRA6.

It localises to the secreted. Its function is as follows. Retinol-binding protein that mediates retinol transport in blood plasma. Delivers retinol from the liver stores to the peripheral tissues. Transfers the bound all-trans retinol to STRA6, that then facilitates retinol transport across the cell membrane. In Gallus gallus (Chicken), this protein is Retinol-binding protein 4 (RBP4).